The following is a 427-amino-acid chain: Retron Mx65 reverse transcriptase (427 aa).

The Reverse transcriptase domain maps to 136 to 366 (RHYSIHRPRE…GAQRVTGVTV (231 aa)). Mg(2+) is bound by residues D219, D315, and D316.

The protein belongs to the bacterial reverse transcriptase family.

The enzyme catalyses DNA(n) + a 2'-deoxyribonucleoside 5'-triphosphate = DNA(n+1) + diphosphate. Its function is as follows. Reverse transcriptase (RT) responsible for synthesis of msDNA-Mx65 (a branched molecule with RNA linked by a 2',5'-phosphodiester bond to ssDNA). The retron transcript serves as primer (from a conserved internal G residue) and template for the reaction, and codes for the RT. The retron is involved in antiviral defense. The protein is Retron Mx65 reverse transcriptase of Myxococcus xanthus.